A 168-amino-acid chain; its full sequence is Putative adenylate kinase (168 aa).

Residues G10, G12, K13, T14, and T15 each coordinate ATP. Residues 28–51 (HLNERIREEGLDAGRDEERDSLVA) form an NMP region. The interval 97–107 (DRGEPAAKAAE) is LID. R98 contacts ATP.

This sequence belongs to the adenylate kinase family. AK6 subfamily. As to quaternary structure, interacts with uS11. Not a structural component of 40S pre-ribosomes, but transiently interacts with them by binding to uS11.

The enzyme catalyses AMP + ATP = 2 ADP. It catalyses the reaction ATP + H2O = ADP + phosphate + H(+). Functionally, broad-specificity nucleoside monophosphate (NMP) kinase that catalyzes the reversible transfer of the terminal phosphate group between nucleoside triphosphates and monophosphates. Also has ATPase activity. Involved in the late maturation steps of the 30S ribosomal particles, specifically 16S rRNA maturation. While NMP activity is not required for ribosome maturation, ATPase activity is. Associates transiently with small ribosomal subunit protein uS11. ATP hydrolysis breaks the interaction with uS11. May temporarily remove uS11 from the ribosome to enable a conformational change of the ribosomal RNA that is needed for the final maturation step of the small ribosomal subunit. This is Putative adenylate kinase from Natronomonas pharaonis (strain ATCC 35678 / DSM 2160 / CIP 103997 / JCM 8858 / NBRC 14720 / NCIMB 2260 / Gabara) (Halobacterium pharaonis).